Consider the following 278-residue polypeptide: uncharacterized protein (278 aa).

This is an uncharacterized protein from Methanocaldococcus jannaschii (strain ATCC 43067 / DSM 2661 / JAL-1 / JCM 10045 / NBRC 100440) (Methanococcus jannaschii).